Consider the following 215-residue polypeptide: Pyridoxine/pyridoxamine 5'-phosphate oxidase (215 aa).

Residues 9–12 and Lys69 each bind substrate; that span reads RREY. Residues 64–69, 79–80, Lys86, and Gln108 each bind FMN; these read RILLLK and FT. Tyr126, Arg130, and Ser134 together coordinate substrate. Residues 143-144 and Trp188 contribute to the FMN site; that span reads QS. 194–196 is a binding site for substrate; it reads RLH. Arg198 serves as a coordination point for FMN.

The protein belongs to the pyridoxamine 5'-phosphate oxidase family. Homodimer. It depends on FMN as a cofactor.

It catalyses the reaction pyridoxamine 5'-phosphate + O2 + H2O = pyridoxal 5'-phosphate + H2O2 + NH4(+). The enzyme catalyses pyridoxine 5'-phosphate + O2 = pyridoxal 5'-phosphate + H2O2. The protein operates within cofactor metabolism; pyridoxal 5'-phosphate salvage; pyridoxal 5'-phosphate from pyridoxamine 5'-phosphate: step 1/1. It participates in cofactor metabolism; pyridoxal 5'-phosphate salvage; pyridoxal 5'-phosphate from pyridoxine 5'-phosphate: step 1/1. Catalyzes the oxidation of either pyridoxine 5'-phosphate (PNP) or pyridoxamine 5'-phosphate (PMP) into pyridoxal 5'-phosphate (PLP). In Pseudomonas paraeruginosa (strain DSM 24068 / PA7) (Pseudomonas aeruginosa (strain PA7)), this protein is Pyridoxine/pyridoxamine 5'-phosphate oxidase.